A 620-amino-acid chain; its full sequence is 1-deoxy-D-xylulose-5-phosphate synthase (620 aa).

Thiamine diphosphate is bound by residues His80 and 121-123 (GHS). Asp152 is a binding site for Mg(2+). Residues 153 to 154 (GA), Asn181, Tyr288, and Glu370 each bind thiamine diphosphate. Mg(2+) is bound at residue Asn181.

The protein belongs to the transketolase family. DXPS subfamily. Homodimer. Mg(2+) serves as cofactor. The cofactor is thiamine diphosphate.

It carries out the reaction D-glyceraldehyde 3-phosphate + pyruvate + H(+) = 1-deoxy-D-xylulose 5-phosphate + CO2. It participates in metabolic intermediate biosynthesis; 1-deoxy-D-xylulose 5-phosphate biosynthesis; 1-deoxy-D-xylulose 5-phosphate from D-glyceraldehyde 3-phosphate and pyruvate: step 1/1. In terms of biological role, catalyzes the acyloin condensation reaction between C atoms 2 and 3 of pyruvate and glyceraldehyde 3-phosphate to yield 1-deoxy-D-xylulose-5-phosphate (DXP). The protein is 1-deoxy-D-xylulose-5-phosphate synthase of Salmonella arizonae (strain ATCC BAA-731 / CDC346-86 / RSK2980).